A 67-amino-acid polypeptide reads, in one-letter code: MKNIAMKTTVVLTILLLSVLTAINADTMKKRSDYCSNDFCFFSCRRDRCARGDCENGKCVCKNCHLN.

The first 25 residues, 1 to 25 (MKNIAMKTTVVLTILLLSVLTAINA), serve as a signal peptide directing secretion. Positions 26 to 31 (DTMKKR) are excised as a propeptide. Disulfide bonds link Cys35-Cys54, Cys40-Cys59, Cys44-Cys61, and Cys49-Cys64.

This sequence belongs to the short scorpion toxin superfamily. Potassium channel inhibitor family. In terms of tissue distribution, expressed by the venom gland.

It localises to the secreted. Blocks Kv1.1/KCNA1, Kv1.2/KCNA2 and Kv1.3/KCNA3 voltage-gated potassium channels. This is Potassium channel toxin alpha-KTx from Hoffmannihadrurus gertschi (Scorpion).